Reading from the N-terminus, the 576-residue chain is K(+)/H(+) antiporter NhaP2 (576 aa).

13 helical membrane passes run 6–26, 34–54, 58–78, 87–107, 109–129, 163–183, 185–205, 219–239, 242–262, 271–291, 299–319, 335–355, and 359–379; these read INSFFLIGALLTAVSVLLSPM, ILLIFLAVGILAGEDGPGGIL, YSTAYLVSNLALAIILLDGGM, VALWPALSLATFGVAITTSIT, MMAAWLFDLHWLQGLLVGAIV, PMAVFLTVTLIAILANVDTEM, FSFMFISFIKQFGLGICLGLG, LADGLYSILVLSGGLIIYAAS, LGGSGILSIYLVGLFLGNKPT, VLDGMTWVSQIGMFLVLGLLL, ILIPGFALAFGMILFARPVAV, WFISWVGLRGAVPIILAVFPM, and LPGAQLYFNLAFFVVLVSLLV. The 82-residue stretch at 405–486 folds into the RCK C-terminal domain; it reads SGVEIYPSSE…LEALSNLFSQ (82 aa).

Belongs to the monovalent cation:proton antiporter 1 (CPA1) transporter (TC 2.A.36) family. NhaP2 subfamily.

It localises to the cell inner membrane. It catalyses the reaction K(+)(in) + H(+)(out) = K(+)(out) + H(+)(in). K(+)/H(+) antiporter that extrudes potassium in exchange for external protons and maintains the internal concentration of potassium under toxic levels. This Shewanella baltica (strain OS155 / ATCC BAA-1091) protein is K(+)/H(+) antiporter NhaP2.